Here is a 257-residue protein sequence, read N- to C-terminus: Phosphonates import ATP-binding protein PhnC (257 aa).

Residues 7–251 form the ABC transporter domain; that stretch reads IQLKDVSKIY…VFTDIYNGGD (245 aa). 40–47 provides a ligand contact to ATP; sequence GLSGAGKS.

The protein belongs to the ABC transporter superfamily. Phosphonates importer (TC 3.A.1.9.1) family. The complex is composed of two ATP-binding proteins (PhnC), two transmembrane proteins (PhnE) and a solute-binding protein (PhnD).

Its subcellular location is the cell membrane. The catalysed reaction is phosphonate(out) + ATP + H2O = phosphonate(in) + ADP + phosphate + H(+). In terms of biological role, part of the ABC transporter complex PhnCDE involved in phosphonates import. Responsible for energy coupling to the transport system. The sequence is that of Phosphonates import ATP-binding protein PhnC from Lactobacillus acidophilus (strain ATCC 700396 / NCK56 / N2 / NCFM).